A 311-amino-acid polypeptide reads, in one-letter code: Transmembrane protein DDB_G0273707/DDB_G0273361 (311 aa).

The segment at 1–113 (MNEIEVDNLS…NNNNNKNENN (113 aa)) is disordered. A glycan (N-linked (GlcNAc...) asparagine) is linked at Asn-8. The span at 9 to 18 (LSHTNKNVAT) shows a compositional bias: polar residues. Asn-35, Asn-38, Asn-62, and Asn-76 each carry an N-linked (GlcNAc...) asparagine glycan. 2 stretches are compositionally biased toward low complexity: residues 37–67 (SNNS…SNSN) and 76–111 (NNSN…NKNE). Residues 95–124 (NNNNNNNNNNNNNNKNENNNKIKNEKINIL) are a coiled coil. 5 helical membrane passes run 150–170 (LEEI…LALL), 181–201 (IFLL…PKSP), 208–228 (LVLG…ALVY), 235–255 (VACA…KSIH), and 276–296 (FYYI…TALI).

The protein localises to the membrane. In Dictyostelium discoideum (Social amoeba), this protein is Transmembrane protein DDB_G0273707/DDB_G0273361.